The primary structure comprises 45 residues: Thymosin beta (45 aa).

The tract at residues 1-45 (MADKPNMTEITSFDKTKLRKTETQEKNPLPTKETIEQERQGESTP) is disordered. Composition is skewed to basic and acidic residues over residues 12–25 (SFDK…ETQE) and 33–45 (ETIE…ESTP).

The protein belongs to the thymosin beta family.

It is found in the cytoplasm. The protein localises to the cytoskeleton. Functionally, plays an important role in the organization of the cytoskeleton. Binds to and sequesters actin monomers (G actin) and therefore inhibits actin polymerization. The polypeptide is Thymosin beta (tmsb) (Danio rerio (Zebrafish)).